Here is a 246-residue protein sequence, read N- to C-terminus: Octanoyltransferase (246 aa).

The BPL/LPL catalytic domain maps to 50–231 (PDTDDEIWVV…RLIAHLDGAT (182 aa)). Substrate contacts are provided by residues 90-97 (RGGQITYH), 162-164 (ALG), and 175-177 (GLS). The active-site Acyl-thioester intermediate is the Cys-193.

It belongs to the LipB family.

The protein resides in the cytoplasm. The catalysed reaction is octanoyl-[ACP] + L-lysyl-[protein] = N(6)-octanoyl-L-lysyl-[protein] + holo-[ACP] + H(+). Its pathway is protein modification; protein lipoylation via endogenous pathway; protein N(6)-(lipoyl)lysine from octanoyl-[acyl-carrier-protein]: step 1/2. Its function is as follows. Catalyzes the transfer of endogenously produced octanoic acid from octanoyl-acyl-carrier-protein onto the lipoyl domains of lipoate-dependent enzymes. Lipoyl-ACP can also act as a substrate although octanoyl-ACP is likely to be the physiological substrate. The protein is Octanoyltransferase of Burkholderia pseudomallei (strain 1106a).